A 472-amino-acid polypeptide reads, in one-letter code: 3-isopropylmalate dehydratase large subunit (472 aa).

Residues C352, C412, and C415 each contribute to the [4Fe-4S] cluster site.

It belongs to the aconitase/IPM isomerase family. LeuC type 1 subfamily. Heterodimer of LeuC and LeuD. [4Fe-4S] cluster serves as cofactor.

It carries out the reaction (2R,3S)-3-isopropylmalate = (2S)-2-isopropylmalate. It functions in the pathway amino-acid biosynthesis; L-leucine biosynthesis; L-leucine from 3-methyl-2-oxobutanoate: step 2/4. Its function is as follows. Catalyzes the isomerization between 2-isopropylmalate and 3-isopropylmalate, via the formation of 2-isopropylmaleate. The polypeptide is 3-isopropylmalate dehydratase large subunit (Roseiflexus castenholzii (strain DSM 13941 / HLO8)).